Consider the following 136-residue polypeptide: MGATISILASYDNPNLFTAMILMSPLVNADAVSRLNLLAAKLMGTITPNAPVGKLCPESVSRDMDKVYKYQYDPLINHEKIKAGFASQVLKATNKVRKIISKINTPRLSYSREQTMRLVMFQVHIISCNMQIVIEK.

This sequence belongs to the poxviridae K5 protein family.

This Homo sapiens (Human) protein is Protein K5.